Reading from the N-terminus, the 125-residue chain is Holo-[acyl-carrier-protein] synthase (125 aa).

Residues Asp8 and Glu57 each coordinate Mg(2+).

Belongs to the P-Pant transferase superfamily. AcpS family. Mg(2+) serves as cofactor.

The protein resides in the cytoplasm. The enzyme catalyses apo-[ACP] + CoA = holo-[ACP] + adenosine 3',5'-bisphosphate + H(+). Its function is as follows. Transfers the 4'-phosphopantetheine moiety from coenzyme A to a Ser of acyl-carrier-protein. In Neisseria meningitidis serogroup A / serotype 4A (strain DSM 15465 / Z2491), this protein is Holo-[acyl-carrier-protein] synthase.